We begin with the raw amino-acid sequence, 147 residues long: UPF0460 protein in nifX-nifW intergenic region (147 aa).

This sequence belongs to the UPF0460 family.

The chain is UPF0460 protein in nifX-nifW intergenic region from Frankia alni.